A 260-amino-acid polypeptide reads, in one-letter code: Adenosylcobinamide-GDP ribazoletransferase (260 aa).

A run of 6 helical transmembrane segments spans residues Leu-43–Phe-63, Pro-64–His-84, Gly-117–Leu-137, Val-143–Phe-163, Val-197–Val-217, and Thr-237–Trp-257.

Belongs to the CobS family. The cofactor is Mg(2+).

Its subcellular location is the cell inner membrane. The catalysed reaction is alpha-ribazole + adenosylcob(III)inamide-GDP = adenosylcob(III)alamin + GMP + H(+). The enzyme catalyses alpha-ribazole 5'-phosphate + adenosylcob(III)inamide-GDP = adenosylcob(III)alamin 5'-phosphate + GMP + H(+). It functions in the pathway cofactor biosynthesis; adenosylcobalamin biosynthesis; adenosylcobalamin from cob(II)yrinate a,c-diamide: step 7/7. Functionally, joins adenosylcobinamide-GDP and alpha-ribazole to generate adenosylcobalamin (Ado-cobalamin). Also synthesizes adenosylcobalamin 5'-phosphate from adenosylcobinamide-GDP and alpha-ribazole 5'-phosphate. This chain is Adenosylcobinamide-GDP ribazoletransferase, found in Shewanella amazonensis (strain ATCC BAA-1098 / SB2B).